Reading from the N-terminus, the 573-residue chain is Phosphoenolpyruvate-protein phosphotransferase (573 aa).

The Tele-phosphohistidine intermediate role is filled by His190. Substrate-binding residues include Arg297 and Arg333. The Mg(2+) site is built by Glu432 and Asp456. 455–456 provides a ligand contact to phosphoenolpyruvate; the sequence is ND. Residue Arg466 participates in substrate binding. Cys503 serves as the catalytic Proton donor.

This sequence belongs to the PEP-utilizing enzyme family. Homodimer. Mg(2+) serves as cofactor.

The protein resides in the cytoplasm. The catalysed reaction is L-histidyl-[protein] + phosphoenolpyruvate = N(pros)-phospho-L-histidyl-[protein] + pyruvate. Functionally, general (non sugar-specific) component of the phosphoenolpyruvate-dependent sugar phosphotransferase system (sugar PTS). This major carbohydrate active-transport system catalyzes the phosphorylation of incoming sugar substrates concomitantly with their translocation across the cell membrane. Enzyme I transfers the phosphoryl group from phosphoenolpyruvate (PEP) to the phosphoryl carrier protein (HPr). The sequence is that of Phosphoenolpyruvate-protein phosphotransferase (ptsI) from Staphylococcus carnosus (strain TM300).